We begin with the raw amino-acid sequence, 201 residues long: Large ribosomal subunit protein uL4 (201 aa).

The disordered stretch occupies residues 45–73; the sequence is AQKTRAEVTGSGKKPWRQKGTGRARAGSV.

The protein belongs to the universal ribosomal protein uL4 family. As to quaternary structure, part of the 50S ribosomal subunit.

In terms of biological role, one of the primary rRNA binding proteins, this protein initially binds near the 5'-end of the 23S rRNA. It is important during the early stages of 50S assembly. It makes multiple contacts with different domains of the 23S rRNA in the assembled 50S subunit and ribosome. Its function is as follows. Forms part of the polypeptide exit tunnel. In Yersinia pseudotuberculosis serotype O:1b (strain IP 31758), this protein is Large ribosomal subunit protein uL4.